Here is a 184-residue protein sequence, read N- to C-terminus: Cathelicidin-related peptide Pt_CRAMP1 (184 aa).

The N-terminal stretch at 1-22 is a signal peptide; the sequence is MEGFFWKTWLVVAAFAIGGTSS. Positions 23 to 150 are excised as a propeptide; the sequence is LPHKPLTYEE…EDEKDQPRRV (128 aa). Intrachain disulfides connect cysteine 81–cysteine 92 and cysteine 103–cysteine 120. Residues 125–144 are compositionally biased toward acidic residues; that stretch reads EDEEQNQEEEEEEEKEEDEK. The segment at 125–147 is disordered; that stretch reads EDEEQNQEEEEEEEKEEDEKDQP.

Belongs to the cathelicidin family. In terms of tissue distribution, expressed by the venom gland.

Its subcellular location is the secreted. It is found in the target cell membrane. In terms of biological role, potent antimicrobial peptide against Gram-negative (MIC=2 ug/ml against E.coli ATCC 25922, MIC=8 ug/ml against P.aeruginosa) and Gram-positive bacteria (MIC=32 ug/ml against E.faecalis, MIC=32 ug/ml against S.aureus). Adopts an amphipathic alpha helical conformation, that may allow to partition into the target membrane. High hemolytic activities have been observed on mammalian cells. This chain is Cathelicidin-related peptide Pt_CRAMP1, found in Pseudonaja textilis (Eastern brown snake).